The following is a 582-amino-acid chain: Phosphoribosylaminoimidazole carboxylase (582 aa).

One can recognise an ATP-grasp domain in the interval 114-305; sequence KKYLAEKGVA…QFENHLRAIL (192 aa). 143–200 provides a ligand contact to ATP; the sequence is AGRLGLPLMLKAKTLAYDGRGNSPLKSTSSEDIQASLKFLGDRPLYAEGWAPFVKEVA.

It in the C-terminal section; belongs to the AIR carboxylase family. Class I subfamily.

The catalysed reaction is 5-amino-1-(5-phospho-D-ribosyl)imidazole-4-carboxylate + H(+) = 5-amino-1-(5-phospho-beta-D-ribosyl)imidazole + CO2. Its pathway is purine metabolism; IMP biosynthesis via de novo pathway; 5-amino-1-(5-phospho-D-ribosyl)imidazole-4-carboxylate from 5-amino-1-(5-phospho-D-ribosyl)imidazole (carboxylase route): step 1/1. This chain is Phosphoribosylaminoimidazole carboxylase (ADE2), found in Cryptococcus neoformans var. grubii serotype A (strain H99 / ATCC 208821 / CBS 10515 / FGSC 9487) (Filobasidiella neoformans var. grubii).